A 208-amino-acid polypeptide reads, in one-letter code: 3-demethoxyubiquinol 3-hydroxylase (208 aa).

Glu57, Glu87, His90, Glu139, Glu171, and His174 together coordinate Fe cation.

Belongs to the COQ7 family. It depends on Fe cation as a cofactor.

The protein resides in the cell membrane. It catalyses the reaction a 5-methoxy-2-methyl-3-(all-trans-polyprenyl)benzene-1,4-diol + AH2 + O2 = a 3-demethylubiquinol + A + H2O. The protein operates within cofactor biosynthesis; ubiquinone biosynthesis. Functionally, catalyzes the hydroxylation of 2-nonaprenyl-3-methyl-6-methoxy-1,4-benzoquinol during ubiquinone biosynthesis. In Burkholderia cenocepacia (strain ATCC BAA-245 / DSM 16553 / LMG 16656 / NCTC 13227 / J2315 / CF5610) (Burkholderia cepacia (strain J2315)), this protein is 3-demethoxyubiquinol 3-hydroxylase.